We begin with the raw amino-acid sequence, 120 residues long: Large ribosomal subunit protein uL18 (120 aa).

Belongs to the universal ribosomal protein uL18 family. In terms of assembly, part of the 50S ribosomal subunit; part of the 5S rRNA/L5/L18/L25 subcomplex. Contacts the 5S and 23S rRNAs.

Its function is as follows. This is one of the proteins that bind and probably mediate the attachment of the 5S RNA into the large ribosomal subunit, where it forms part of the central protuberance. In Beijerinckia indica subsp. indica (strain ATCC 9039 / DSM 1715 / NCIMB 8712), this protein is Large ribosomal subunit protein uL18.